Reading from the N-terminus, the 354-residue chain is Biotin synthase (354 aa).

The Radical SAM core domain occupies 41 to 268 (NEVQISRLLS…LSRVRLSAGR (228 aa)). [4Fe-4S] cluster-binding residues include Cys-56, Cys-60, and Cys-63. [2Fe-2S] cluster contacts are provided by Cys-100, Cys-131, Cys-191, and Arg-263.

It belongs to the radical SAM superfamily. Biotin synthase family. In terms of assembly, homodimer. [4Fe-4S] cluster is required as a cofactor. [2Fe-2S] cluster serves as cofactor.

It catalyses the reaction (4R,5S)-dethiobiotin + (sulfur carrier)-SH + 2 reduced [2Fe-2S]-[ferredoxin] + 2 S-adenosyl-L-methionine = (sulfur carrier)-H + biotin + 2 5'-deoxyadenosine + 2 L-methionine + 2 oxidized [2Fe-2S]-[ferredoxin]. It participates in cofactor biosynthesis; biotin biosynthesis; biotin from 7,8-diaminononanoate: step 2/2. Catalyzes the conversion of dethiobiotin (DTB) to biotin by the insertion of a sulfur atom into dethiobiotin via a radical-based mechanism. This Shewanella amazonensis (strain ATCC BAA-1098 / SB2B) protein is Biotin synthase.